The sequence spans 140 residues: MAKKVEKIVKLQIPAGKATPAPPVGPALGQAGINIMGFTKEFNARTADQAGLIIPVVISVYEDRSFTFITKTPPAAVLLKKAAKIEKGSGEPNKTKVATVSSDQVKEIAELKMADLNAADVEAAMRMVAGTARSMGIIVE.

It belongs to the universal ribosomal protein uL11 family. As to quaternary structure, part of the ribosomal stalk of the 50S ribosomal subunit. Interacts with L10 and the large rRNA to form the base of the stalk. L10 forms an elongated spine to which L12 dimers bind in a sequential fashion forming a multimeric L10(L12)X complex. One or more lysine residues are methylated.

Its function is as follows. Forms part of the ribosomal stalk which helps the ribosome interact with GTP-bound translation factors. In Enterococcus faecalis (strain ATCC 700802 / V583), this protein is Large ribosomal subunit protein uL11.